The following is a 786-amino-acid chain: DNA repair and recombination protein RAD54-like (786 aa).

The required for chromatin remodeling, strand pairing activities and coupling of ATPase activity stretch occupies residues 2–9 (RRSLAPSQ). Thr-22 bears the Phosphothreonine mark. Residues 165-340 (EGKRGNFNGC…FSLVNFVNPE (176 aa)) form the Helicase ATP-binding domain. An ATP-binding site is contributed by 178–185 (DEMGLGKT). The short motif at 291–294 (DEGH) is the DEGH box element. The 158-residue stretch at 497 to 654 (LLDFMLAAIR…NNDSAEKHFT (158 aa)) folds into the Helicase C-terminal domain. The tract at residues 740–786 (KQPTCITEDNHSEQPQLNSKRNANSVLENDDDEDFDPNSSDEKFLGF) is disordered. A compositionally biased stretch (polar residues) spans 752 to 766 (EQPQLNSKRNANSVL).

The protein belongs to the SNF2/RAD54 helicase family. In terms of assembly, interacts (via N-terminus) with spn-A/Rad51.

It is found in the nucleus. Involved in mitotic DNA repair and meiotic recombination. Functions in the recombinational DNA repair pathway. Essential for interhomolog gene conversion (GC), but may have a less important role in intersister GC than spn-A/Rad51. In the presence of DNA, spn-A/Rad51 enhances the ATPase activity of okr/Rad54. The protein is DNA repair and recombination protein RAD54-like of Drosophila virilis (Fruit fly).